The sequence spans 139 residues: Small ribosomal subunit protein uS11 (139 aa).

Low complexity predominate over residues 1–13 (MAKQAAKGSAAAT). Residues 1-30 (MAKQAAKGSAAATKRQRGKRREKKNVPRGQ) are disordered. Basic residues predominate over residues 14-23 (KRQRGKRREK).

Belongs to the universal ribosomal protein uS11 family. In terms of assembly, part of the 30S ribosomal subunit. Interacts with proteins S7 and S18. Binds to IF-3.

Located on the platform of the 30S subunit, it bridges several disparate RNA helices of the 16S rRNA. Forms part of the Shine-Dalgarno cleft in the 70S ribosome. The sequence is that of Small ribosomal subunit protein uS11 from Roseiflexus sp. (strain RS-1).